Consider the following 173-residue polypeptide: Adenine phosphoribosyltransferase (173 aa).

It belongs to the purine/pyrimidine phosphoribosyltransferase family. Homodimer.

The protein resides in the cytoplasm. The enzyme catalyses AMP + diphosphate = 5-phospho-alpha-D-ribose 1-diphosphate + adenine. It participates in purine metabolism; AMP biosynthesis via salvage pathway; AMP from adenine: step 1/1. Functionally, catalyzes a salvage reaction resulting in the formation of AMP, that is energically less costly than de novo synthesis. This is Adenine phosphoribosyltransferase from Thermoanaerobacter sp. (strain X514).